The chain runs to 457 residues: MIFAGKAPSNTSTLMKFYSLILYSLLFSFPFLCHPLPLPSYLHHTINLTHSLLAASNPSLANNCWLCISLSSSAYTAVPALQTDRATSPVSLHLQTSFNSPHLYPPEELIYFLDRSIKTSPDISHQQAAALLHTYLKHLSPYINSTPPIFGPLTTQTTIPVAAPLCISRRRPTGIPLGNLSPSRCSFTLHLRSPTTNITETIGAFQLHITDKPSINTDKLKNISSHYCLGRHLPCISLHPWLPSPCSSDCPPRPSSCLLIPSPENNSESLLVDTRRFLIHHENRTSPSTQLPHQSPLQPLTAAALAGSLGVWIQDTPFSTPSHLFTLHLQFCLAQGLFFLCGSSNYMCLPANWTGTCTLVFLTPKIQFANGTEELPVPLMTPTRQKRVIPLIPLMFGLGLSASTIALSTGIAGISTSVMTFRSLSNDFSASITDISQTLSVLQAQVDSLAAVVLQNR.

A signal peptide spans 1–35 (MIFAGKAPSNTSTLMKFYSLILYSLLFSFPFLCHP). N-linked (GlcNAc...) asparagine glycosylation is found at Asn-10 and Asn-47. The CXXC signature appears at 64–67 (CWLC). N-linked (GlcNAc...) asparagine glycans are attached at residues Asn-197, Asn-222, Asn-265, Asn-283, Asn-352, and Asn-370. The interval 388 to 408 (VIPLIPLMFGLGLSASTIALS) is fusion peptide.

This sequence belongs to the gamma type-C retroviral envelope protein family. HERV class-I H env subfamily. The surface (SU) and transmembrane (TM) proteins form a heterodimer. SU and TM are attached by noncovalent interactions or by a labile interchain disulfide bond. Post-translationally, specific enzymatic cleavages in vivo yield the mature SU and TM proteins. In terms of processing, the CXXC motif is highly conserved across a broad range of retroviral envelope proteins. It is thought to participate in the formation of a labile disulfide bond possibly with the CX6CC motif present in the transmembrane protein.

It localises to the virion. In terms of biological role, retroviral envelope proteins mediate receptor recognition and membrane fusion during early infection. Endogenous envelope proteins may have kept, lost or modified their original function during evolution. Its function is as follows. SU mediates receptor recognition. TM anchors the envelope heterodimer to the viral membrane through one transmembrane domain. The other hydrophobic domain, called fusion peptide, mediates fusion of the viral membrane with the target cell membrane. The protein is ERV-H1 provirus ancestral Env polyprotein of Pan troglodytes (Chimpanzee).